The following is a 387-amino-acid chain: Succinate--CoA ligase [ADP-forming] subunit beta (387 aa).

Residues 9–245 (KDLLESYGLK…KSQENAKELK (237 aa)) enclose the ATP-grasp domain. Residues Lys46, 53–55 (GRG), Glu100, Tyr103, and Glu108 each bind ATP. Asn200 and Asp214 together coordinate Mg(2+). Substrate-binding positions include Asn265 and 322–324 (GIV).

This sequence belongs to the succinate/malate CoA ligase beta subunit family. In terms of assembly, heterotetramer of two alpha and two beta subunits. Mg(2+) serves as cofactor.

The enzyme catalyses succinate + ATP + CoA = succinyl-CoA + ADP + phosphate. It carries out the reaction GTP + succinate + CoA = succinyl-CoA + GDP + phosphate. It participates in carbohydrate metabolism; tricarboxylic acid cycle; succinate from succinyl-CoA (ligase route): step 1/1. In terms of biological role, succinyl-CoA synthetase functions in the citric acid cycle (TCA), coupling the hydrolysis of succinyl-CoA to the synthesis of either ATP or GTP and thus represents the only step of substrate-level phosphorylation in the TCA. The beta subunit provides nucleotide specificity of the enzyme and binds the substrate succinate, while the binding sites for coenzyme A and phosphate are found in the alpha subunit. The polypeptide is Succinate--CoA ligase [ADP-forming] subunit beta (Francisella tularensis subsp. holarctica (strain FTNF002-00 / FTA)).